The sequence spans 102 residues: Putative septation protein SpoVG 2 (102 aa).

It belongs to the SpoVG family.

In terms of biological role, could be involved in septation. This Listeria innocua serovar 6a (strain ATCC BAA-680 / CLIP 11262) protein is Putative septation protein SpoVG 2.